Consider the following 125-residue polypeptide: Large ribosomal subunit protein bL19 (125 aa).

The protein belongs to the bacterial ribosomal protein bL19 family.

This protein is located at the 30S-50S ribosomal subunit interface and may play a role in the structure and function of the aminoacyl-tRNA binding site. The protein is Large ribosomal subunit protein bL19 of Wolbachia sp. subsp. Brugia malayi (strain TRS).